The primary structure comprises 200 residues: ATP-dependent Clp protease proteolytic subunit 3 (200 aa).

Ser-101 serves as the catalytic Nucleophile. His-126 is a catalytic residue.

The protein belongs to the peptidase S14 family. Fourteen ClpP subunits assemble into 2 heptameric rings which stack back to back to give a disk-like structure with a central cavity, resembling the structure of eukaryotic proteasomes.

It localises to the cytoplasm. The catalysed reaction is Hydrolysis of proteins to small peptides in the presence of ATP and magnesium. alpha-casein is the usual test substrate. In the absence of ATP, only oligopeptides shorter than five residues are hydrolyzed (such as succinyl-Leu-Tyr-|-NHMec, and Leu-Tyr-Leu-|-Tyr-Trp, in which cleavage of the -Tyr-|-Leu- and -Tyr-|-Trp bonds also occurs).. Cleaves peptides in various proteins in a process that requires ATP hydrolysis. Has a chymotrypsin-like activity. Plays a major role in the degradation of misfolded proteins. The sequence is that of ATP-dependent Clp protease proteolytic subunit 3 from Synechococcus sp. (strain CC9605).